A 212-amino-acid chain; its full sequence is ER lumen protein-retaining receptor 1 (212 aa).

Residues 1–4 (MNLF) are Lumenal-facing. A helical transmembrane segment spans residues 5–24 (RFLGDLSHLLAIILLLLKIW). The Cytoplasmic portion of the chain corresponds to 25–32 (KSRSCAGI). Residues 33–52 (SGKSQVLFAVVFTARYLDLF) traverse the membrane as a helical segment. Residues 47-48 (RY) form an interaction with the K-D-E-L motif on target proteins region. The Lumenal portion of the chain corresponds to 53-58 (TNYISL). Residues 59-79 (YNTCMKVVYIACSFTTVWMIY) traverse the membrane as a helical segment. Topologically, residues 80–92 (SKFKATYDGNHDT) are cytoplasmic. The chain crosses the membrane as a helical span at residues 93–110 (FRVEFLVVPTAILAFLVN). The Lumenal segment spans residues 111–116 (HDFTPL). Residues 117 to 135 (EILWTFSIYLESVAILPQL) form a helical membrane-spanning segment. Residues 136-149 (FMVSKTGEAETITS) are Cytoplasmic-facing. A helical transmembrane segment spans residues 150 to 168 (HYLFALGVYRTLYLFNWIW). The tract at residues 159-169 (RTLYLFNWIWR) is interaction with the K-D-E-L motif on target proteins. The Lumenal portion of the chain corresponds to 169–178 (RYHFEGFFDL). The chain crosses the membrane as a helical span at residues 179 to 199 (IAIVAGLVQTVLYCDFFYLYI). At 200–212 (TKVLKGKKLSLPA) the chain is on the cytoplasmic side. Positions 204–207 (KGKK) are important for recycling of cargo proteins with the sequence motif K-D-E-L from the Golgi to the endoplasmic reticulum. Phosphoserine; by PKA is present on S209.

Belongs to the ERD2 family. In terms of assembly, upon ligand binding the receptor oligomerizes and interacts with components of the transport machinery such as ARFGAP1 and ARF1. In terms of processing, phosphorylation by PKA at Ser-209 is required for endoplasmic reticulum retention function.

Its subcellular location is the golgi apparatus membrane. The protein resides in the cytoplasmic vesicle. It is found in the COPI-coated vesicle membrane. The protein localises to the endoplasmic reticulum membrane. It localises to the endoplasmic reticulum-Golgi intermediate compartment membrane. In terms of biological role, receptor for the C-terminal sequence motif K-D-E-L that is present on endoplasmic reticulum resident proteins and that mediates their recycling from the Golgi back to the endoplasmic reticulum. In Mus musculus (Mouse), this protein is ER lumen protein-retaining receptor 1 (Kdelr1).